Here is a 98-residue protein sequence, read N- to C-terminus: NADH-ubiquinone oxidoreductase chain 4L (98 aa).

A run of 3 helical transmembrane segments spans residues M1–M21, L31–I51, and I61–V81.

This sequence belongs to the complex I subunit 4L family. Core subunit of respiratory chain NADH dehydrogenase (Complex I) which is composed of 45 different subunits.

It is found in the mitochondrion inner membrane. The enzyme catalyses a ubiquinone + NADH + 5 H(+)(in) = a ubiquinol + NAD(+) + 4 H(+)(out). In terms of biological role, core subunit of the mitochondrial membrane respiratory chain NADH dehydrogenase (Complex I) which catalyzes electron transfer from NADH through the respiratory chain, using ubiquinone as an electron acceptor. Part of the enzyme membrane arm which is embedded in the lipid bilayer and involved in proton translocation. In Chalinolobus tuberculatus (New Zealand long-tailed bat), this protein is NADH-ubiquinone oxidoreductase chain 4L (MT-ND4L).